The primary structure comprises 1068 residues: Tricorn protease homolog (1068 aa).

The tract at residues 61 to 326 is six-bladed beta propeller; the sequence is MKAYYMYPDI…DSLTKLDINL (266 aa). Positions 338–686 are seven-bladed beta propeller; the sequence is VNVMEYMNEA…RKGGVIDLSR (349 aa). Positions 692–762 are C-1; the sequence is EPEKEWRQML…RTSHSYETAY (71 aa). Residue His-756 is the Charge relay system of the active site. The PDZ-like stretch occupies residues 771-864; sequence SVGGLGAEFE…RVTVKVLKDE (94 aa). The interval 865–1068 is C-2; it reads RFLIYRYWVE…TAIELALKQL (204 aa). Gly-927 provides a ligand contact to substrate. The active-site Nucleophile is the Ser-974. Residue Glu-1032 is the Charge relay system of the active site.

This sequence belongs to the peptidase S41B family.

It localises to the cytoplasm. Its function is as follows. Degrades oligopeptides in a sequential manner. In Saccharolobus solfataricus (strain ATCC 35092 / DSM 1617 / JCM 11322 / P2) (Sulfolobus solfataricus), this protein is Tricorn protease homolog (tri).